The following is a 309-amino-acid chain: Early nodulin-75 (309 aa).

Residues 1 to 25 (MTSVLHYSLLLLLLGVVILTTPVLA) form the signal peptide. Residues 56–67 (PPPVHHPPPEYQ) show a composition bias toward pro residues. The segment at 56 to 309 (PPPVHHPPPE…YGRYPPSKKN (254 aa)) is disordered. 2 stretches are compositionally biased toward basic and acidic residues: residues 81–210 (PHEK…EKPP) and 219–247 (KPPH…HEKP). Composition is skewed to pro residues over residues 248–276 (PPVY…VYPP) and 283–302 (IYEP…PYGR).

This sequence belongs to the nodulin 75 family.

Its function is as follows. Involved in early stages of root nodule development. The chain is Early nodulin-75 (ENOD2A) from Glycine max (Soybean).